We begin with the raw amino-acid sequence, 247 residues long: 2,3-bisphosphoglycerate-dependent phosphoglycerate mutase (247 aa).

Substrate-binding positions include 13-20 (RHGESDWN), 26-27 (TG), Arg-65, 92-95 (ERHY), Lys-103, 119-120 (RR), and 186-187 (GN). His-14 acts as the Tele-phosphohistidine intermediate in catalysis. Glu-92 acts as the Proton donor/acceptor in catalysis.

Belongs to the phosphoglycerate mutase family. BPG-dependent PGAM subfamily. Homotetramer, dimer of dimers.

The catalysed reaction is (2R)-2-phosphoglycerate = (2R)-3-phosphoglycerate. The protein operates within carbohydrate degradation; glycolysis; pyruvate from D-glyceraldehyde 3-phosphate: step 3/5. Its function is as follows. Catalyzes the interconversion of 2-phosphoglycerate and 3-phosphoglycerate. The polypeptide is 2,3-bisphosphoglycerate-dependent phosphoglycerate mutase (Mycobacterium leprae (strain Br4923)).